Here is a 938-residue protein sequence, read N- to C-terminus: Isoleucine--tRNA ligase (938 aa).

The 'HIGH' region motif lies at 58-68 (PYANGSIHIGH). Glu-561 is a binding site for L-isoleucyl-5'-AMP. A 'KMSKS' region motif is present at residues 602–606 (KMSKS). Position 605 (Lys-605) interacts with ATP. Residues Cys-901, Cys-904, Cys-921, and Cys-924 each coordinate Zn(2+).

This sequence belongs to the class-I aminoacyl-tRNA synthetase family. IleS type 1 subfamily. In terms of assembly, monomer. Zn(2+) serves as cofactor.

The protein localises to the cytoplasm. The catalysed reaction is tRNA(Ile) + L-isoleucine + ATP = L-isoleucyl-tRNA(Ile) + AMP + diphosphate. Functionally, catalyzes the attachment of isoleucine to tRNA(Ile). As IleRS can inadvertently accommodate and process structurally similar amino acids such as valine, to avoid such errors it has two additional distinct tRNA(Ile)-dependent editing activities. One activity is designated as 'pretransfer' editing and involves the hydrolysis of activated Val-AMP. The other activity is designated 'posttransfer' editing and involves deacylation of mischarged Val-tRNA(Ile). This chain is Isoleucine--tRNA ligase, found in Citrobacter koseri (strain ATCC BAA-895 / CDC 4225-83 / SGSC4696).